The following is a 1479-amino-acid chain: MAPLLGRKPFPLVKPLPGEEPLFTIPHTQEAFRTREEYEARLERYSERIWTCKSTGSSQLTHKEAWEEEQEVAELLKEEFPNWYEKLVLEMVHHNTASLEKLVDSAWLEIMTKYAVGEECDFEVGKEKMLKVKIVKIHPLEKVDEEAVEKKSDGACDSPSSDKENSSQMAQDLQKKETVVKEDEGRRESINDRARRSPRKLPTSLKKGERKWAPPKFLPHKYDVKLQNEDKIISNVPADSLIRTERPPNKEILRYFIRHNALRAGTGENAPWVVEDELVKKYSLPSKFSDFLLDPYKYMTLNPSTKRRNTGSPDRKPSKKPKRDSSSLSSPLNPKLWCHVHLEKSLNGPPLKVKNSKNSKSPEEHLEGVMKIMSPNNNKLHSFHIPKKGPAAKKPGKHSDKPLKAKGRGKGILNGQKSTGNSKSPSKCVKTPKTKMKQMTLLDMAKGTQKMTRTPRSSGGVPRSSGKPHKHLPPAALHLIAYYKENKDKEDKKSALSCVISKTARLLSNEDRARLPEELRALVQKRYELLEHKKRWASMSEEQRKEYLKKKRQELKERLREKAKERREREMLERLEKQKRFEDQELGGRNLPAFRLVDTPEGLPNTLFGDVALVVEFLSCYSGLLLPDAQYPITAVSLMEALSADKGGFLYLNRVLVILLQTLLQDEIAEDYGELGMKLSEIPLTLHSVSELVRLCLRRCDVQEDSEGSETDDNKDSTPFEDNEVQDEFLEKLETSEFFELTSEEKLRILTALCHRILMTYSVQDHMETRQQVSAELWKERLAVLKEENDKKRAEKQKRKEMEARNKENGKEENVLGKVDRKKEIVKIEQQVEVEADDMISAVKSRRLLSMQAKRKREIQERETKVRLEREAEEERMRKHKAAAEKAFQEGIAKAKLVLRRTPIGTDRNHNRYWLFSNEVPGLFIEKGWVHNSIDYRFKHHRKDHSNLPDDDYCPRSKKANLGKNASVNAHHGPALEAVETTVPKQGQNLWFLCDSQKELDELLSCLHPQGIRESQLKERLEKRYQEITHSIYLARKPNLGLKSCDGNQELLNFLRSDLIEVATRLQKGGLGYMEGTSEFEARVISLEKLKDFGECVIALQASVIKKFLQGFMAPKQKKRKLQSEDSTKSEEVDEEKKMVEEAKVASALEKWKTAIREAQTFSRMHVLLGMLDACIKWDMSAENARCKVCRKKGEDDKLILCDECNKAFHLFCLRPALYEVPDGEWQCPACQPPTARRNSRGRNYTEESTSEGSEGDESGEEEEEEEEEEEEEEDYEVAGLRLRPRKTIRGKQSVIPAARPGRPPGKKSHPARRSRPKDDPEVDDLVLQTKRISRRQSLELQKCEDILHKLVKYRFSWPFREPVTRDEAEDYYDVIEHPMDFQTIQNKCSCGNYRSVQEFLTDMKQVFANAELYNCRGSHVLSCMEKTEQCLLALLQKHLPGHPYVRRKRRKFPDRLADDEGDSDSESVGQSRGRRQKK.

The WAC domain occupies 20–126 (EPLFTIPHTQ…GEECDFEVGK (107 aa)). The segment at 146 to 212 (EAVEKKSDGA…TSLKKGERKW (67 aa)) is disordered. 2 stretches are compositionally biased toward basic and acidic residues: residues 148–165 (VEKK…DKEN) and 173–195 (LQKK…DRAR). Phosphoserine occurs at positions 152, 158, and 161. A C motif motif is present at residues 207–213 (KGERKWA). Residue threonine 266 is modified to Phosphothreonine. The interval 302–333 (NPSTKRRNTGSPDRKPSKKPKRDSSSLSSPLN) is disordered. Phosphoserine is present on residues serine 325, serine 330, serine 345, serine 361, and serine 374. Disordered stretches follow at residues 376 to 433 (NNNK…KTPK) and 448 to 472 (TQKM…HKHL). The span at 381-396 (HSFHIPKKGPAAKKPG) shows a compositional bias: basic residues. Residues 415 to 425 (GQKSTGNSKSP) show a composition bias toward polar residues. The span at 454–465 (TPRSSGGVPRSS) shows a compositional bias: low complexity. A coiled-coil region spans residues 537–587 (ASMSEEQRKEYLKKKRQELKERLREKAKERREREMLERLEKQKRFEDQELG). In terms of domain architecture, DDT spans 605 to 669 (NTLFGDVALV…LQTLLQDEIA (65 aa)). A phosphoserine mark is found at serine 706, serine 709, and serine 717. Residues 774 to 809 (SAELWKERLAVLKEENDKKRAEKQKRKEMEARNKEN) adopt a coiled-coil conformation. A disordered region spans residues 789-813 (NDKKRAEKQKRKEMEARNKENGKEE). Lysine 827 is covalently cross-linked (Glycyl lysine isopeptide (Lys-Gly) (interchain with G-Cter in SUMO1); alternate). A Glycyl lysine isopeptide (Lys-Gly) (interchain with G-Cter in SUMO2); alternate cross-link involves residue lysine 827. Glycyl lysine isopeptide (Lys-Gly) (interchain with G-Cter in SUMO2) cross-links involve residues lysine 854, lysine 1043, lysine 1089, and lysine 1107. Residues 854-890 (KRKREIQERETKVRLEREAEEERMRKHKAAAEKAFQE) adopt a coiled-coil conformation. Residues 1184–1234 (NARCKVCRKKGEDDKLILCDECNKAFHLFCLRPALYEVPDGEWQCPACQPP) form a PHD-type zinc finger. The segment at 1231–1324 (CQPPTARRNS…SRPKDDPEVD (94 aa)) is disordered. Residues 1254–1277 (SEGDESGEEEEEEEEEEEEEEDYE) are compositionally biased toward acidic residues. Residues 1257–1284 (DESGEEEEEEEEEEEEEEDYEVAGLRLR) adopt a coiled-coil conformation. Residues 1305–1316 (PGKKSHPARRSR) are compositionally biased toward basic residues. Phosphoserine is present on serine 1315. Lysine 1331 bears the N6-acetyllysine mark. One can recognise a Bromo domain in the interval 1335 to 1439 (RRQSLELQKC…QCLLALLQKH (105 aa)). Phosphoserine occurs at positions 1338, 1464, 1466, and 1468. The interval 1451-1479 (RKFPDRLADDEGDSDSESVGQSRGRRQKK) is disordered.

It belongs to the WAL family. BAZ1B subfamily. Component of the WICH-1 ISWI chromatin remodeling complex, at least composed of SMARCA1 and BAZ1B/WSTF, which regulates the spacing of histone octamers on the DNA template to facilitate access to DNA. Within the WICH-1 ISWI chromatin remodeling complex interacts with SMARCA1; the interaction is direct. Component of the WICH-5 ISWI chromatin remodeling complex (also called the WICH complex), at least composed of SMARCA5/SNF2H and BAZ1B/WSTF, which regulates the spacing of histone octamers on the DNA template to facilitate access to DNA. Within the WICH-5 ISWI chromatin remodeling complex interacts with SMARCA5/SNF2H; the interaction is direct. Component of the B-WICH chromatin remodeling complex, at least composed of SMARCA5/SNF2H, BAZ1B/WSTF, SF3B1, DEK, MYO1C, ERCC6, MYBBP1A and DDX21. Within the B-WICH chromatin remodeling complex, interacts with SMARCA5/SNF2H, DDX21, DEK, MYBBP1A, SF3B1 and ERCC6. Interacts with MYO1C. Interacts with PCNA; the interaction is direct and is required for BAZ1B/WSTF binding to replication foci during S phase. Interacts with CDT1. Requires Mn(2+) as cofactor.

Its subcellular location is the nucleus. The enzyme catalyses L-tyrosyl-[protein] + ATP = O-phospho-L-tyrosyl-[protein] + ADP + H(+). In terms of biological role, atypical tyrosine-protein kinase that plays a central role in chromatin remodeling and acts as a transcription regulator. Involved in DNA damage response by phosphorylating 'Tyr-142' of histone H2AX (H2AXY142ph). H2AXY142ph plays a central role in DNA repair and acts as a mark that distinguishes between apoptotic and repair responses to genotoxic stress. Regulatory subunit of the ATP-dependent WICH-1 and WICH-5 ISWI chromatin remodeling complexes, which form ordered nucleosome arrays on chromatin and facilitate access to DNA during DNA-templated processes such as DNA replication, transcription, and repair. Both complexes regulate the spacing of nucleosomes along the chromatin and have the ability to slide mononucleosomes to the center of a DNA template. The WICH-1 ISWI chromatin remodeling complex has a lower ATP hydrolysis rate than the WICH-5 ISWI chromatin remodeling complex. The WICH-5 ISWI chromatin remodeling complex regulates the transcription of various genes, has a role in RNA polymerase I transcription. Within the B-WICH complex has a role in RNA polymerase III transcription. Mediates the recruitment of the WICH-5 ISWI chromatin remodeling complex to replication foci during DNA replication. In Mus musculus (Mouse), this protein is Tyrosine-protein kinase BAZ1B (Baz1b).